The primary structure comprises 226 residues: P24 oleosin isoform A (226 aa).

The tract at residues 1–76 is polar; that stretch reads MTTQVPPHSV…GILLLLAGLT (76 aa). 3 helical membrane passes run 56-76, 90-110, and 111-131; these read VLAV…AGLT, LFVL…LAVA, and GFLT…WILN. Residues 77-130 form a hydrophobic region; it reads LAGTLTGLAVATPLFVLFSPVLVPATVAIGLAVAGFLTSGAFGLTALSSFSWIL. 5 repeat units span residues 159 to 165, 166 to 173, 184 to 191, 192 to 199, and 200 to 207. The 2 X 7 AA tandem repeats stretch occupies residues 159–173; that stretch reads GQKTKEVGQKTKEVG. Composition is skewed to basic and acidic residues over residues 164–173 and 181–216; these read EVGQKTKEVG and QDTR…DVKR. Residues 164–226 form a disordered region; it reads EVGQKTKEVG…TTVTATTATA (63 aa). Residues 184 to 207 form a 3 X 8 AA tandem repeats region; sequence REAAARDAREAAARDAREAAARDA. Residues 217–226 show a composition bias toward low complexity; sequence TTVTATTATA.

This sequence belongs to the oleosin family.

The protein resides in the lipid droplet. It localises to the membrane. In terms of biological role, may have a structural role to stabilize the lipid body during desiccation of the seed by preventing coalescence of the oil. Probably interacts with both lipid and phospholipid moieties of lipid bodies. May also provide recognition signals for specific lipase anchorage in lipolysis during seedling growth. The sequence is that of P24 oleosin isoform A from Glycine max (Soybean).